A 1039-amino-acid chain; its full sequence is MVDWVSGVNGKPLKWSQLEGVLSGTYPQEFKLANVGGSGSGSEKIRYYSSQPFAELHAASYYHFLHGANSPQDMVAAACQQGMSALALIDRDGFYGAMEFAEAAATSGLPTVFGAELTLAPDRILTVLARGVEGYTSLSRLITQARMRGSKDVTIYPPLAEIVESMGKNCRFLLNHSWCTDESLLEIFYPDTVVLEYGVTMRPEDVDHHELLDSIRQRYGFMAIASAVPSAVDRVSARVAGAKQALAQRESLPQATPRLHPMGSTWMRGGDELAGSVDKQLLDASVEVARDCAFALDLVAPNLPRWPVPDEMAHLTGLVNARFDARYRGRSEDVKNQARAQIHHELAVIKELGFPGYFLIVDDIVSFCHTNNILCQGRGSAANSVVCFVLGITNVEPISTGLLFERFLSRDREGPPDIDIDIESGRRDAVITYVYDTYGRDNAAQVANVITYRTKAALRDAARALGYPNTSADAWSTNPDEAPNAVRFLAEQLKGQPRHLGIHAGGMVICDRPIADVVPTEWARKHGRSVVQWDKESCASAGLVKFDLLGLGMLEALHHMIDLVVETTGTTINLWEIDLAEPEIYTMLSNGDAVGVFQVESRAQLATLPRLRPREFFDLVVEVALVRPGPIQGGSVHPYIRRRNGLEAVTYEHPILERSLRKTLGVPLFQEQLMHIAVDAAGFSGGEADELRRAMGSRRSVDTMNRMKRRFFAGLRRNNITGDIAGILWNKIVAFVAYGFPESHSQSFASLVYFSAWFKYHHPAEFYVGLLRAQPMGFYSPQSLLADARRKELTILSHNINKSQVEATVENGAIRLGLNMIKGVGKTEAEAIVAHAPYRDIADLSRRAGLGVAVIEALARSGALETLGVGRRQALWQAGAAATEKAAMLPGLSMVSAPSLPGMNAFELIVADIAMTGVSSENPVALLRRQLELRGVIPASELLNCENARRILLAGVVTHRQRPQTAAGVTFLGLEDETGLANVVVSVGLWKRSRAVKVARAVLVRGVVHNADGVASVTADRVEELPFAEMMSAGSRDFR.

It belongs to the DNA polymerase type-C family. DnaE2 subfamily.

Its subcellular location is the cytoplasm. It carries out the reaction DNA(n) + a 2'-deoxyribonucleoside 5'-triphosphate = DNA(n+1) + diphosphate. DNA polymerase involved in damage-induced mutagenesis and translesion synthesis (TLS). It is not the major replicative DNA polymerase. This Corynebacterium diphtheriae (strain ATCC 700971 / NCTC 13129 / Biotype gravis) protein is Error-prone DNA polymerase.